A 325-amino-acid chain; its full sequence is Ribosomal RNA small subunit methyltransferase H (325 aa).

Residues 45–47 (GGH), D65, Y92, D113, and Q120 each bind S-adenosyl-L-methionine.

Belongs to the methyltransferase superfamily. RsmH family.

The protein localises to the cytoplasm. The enzyme catalyses cytidine(1402) in 16S rRNA + S-adenosyl-L-methionine = N(4)-methylcytidine(1402) in 16S rRNA + S-adenosyl-L-homocysteine + H(+). In terms of biological role, specifically methylates the N4 position of cytidine in position 1402 (C1402) of 16S rRNA. The sequence is that of Ribosomal RNA small subunit methyltransferase H from Oleidesulfovibrio alaskensis (strain ATCC BAA-1058 / DSM 17464 / G20) (Desulfovibrio alaskensis).